Consider the following 547-residue polypeptide: uncharacterized protein (547 aa).

12 helical membrane-spanning segments follow: residues 33 to 53, 107 to 127, 145 to 165, 203 to 223, 231 to 251, 263 to 283, 298 to 318, 351 to 371, 397 to 417, 432 to 452, 470 to 490, and 499 to 519; these read PTFFFALFSAAYVFIDQIMVI, PLIVLLNAINIFIPLGTGVIF, TGLISTTVFGLITQFLVLSFA, VYILIGLNIIPMLSRLFFYLA, FIAIVPPIANLINILIVFLLV, VAGILGYLINFLAYIIYLIYL, LNKIDFNLLVVVSLIGMASFF, TLLTGPIAISNLASAAIFGLL, TVIICISFGSLIYLLTAVAFG, LDLANYFSLIVQAQVFFVATG, IVSLTHGLFVFIPLLFIFQAI, and VFIWLLTANAALAGLINIAFG.

Its subcellular location is the cell membrane. This is an uncharacterized protein from Mycoplasma genitalium (strain ATCC 33530 / DSM 19775 / NCTC 10195 / G37) (Mycoplasmoides genitalium).